Here is a 136-residue protein sequence, read N- to C-terminus: Fatty acid-binding protein homolog 5 (136 aa).

Residues Arg111 and 131–133 (RAY) contribute to the a fatty acid site.

It belongs to the calycin superfamily. Fatty-acid binding protein (FABP) family.

The protein is Fatty acid-binding protein homolog 5 (lbp-5) of Caenorhabditis elegans.